Here is a 127-residue protein sequence, read N- to C-terminus: MNEKVRLLKIRAKIKRKKPKFLRQEWWRFPKFKNDPKWRKPKGTDSKMRVKLKGKARSPSIGWSSPKAVRGLHPSGYEEVLVYNVKDLELIDSKRQAARIAATVGKKKRIMIIERARELGIKVLNAR.

Positions 37–48 (KWRKPKGTDSKM) are enriched in basic and acidic residues. Residues 37–65 (KWRKPKGTDSKMRVKLKGKARSPSIGWSS) are disordered.

It belongs to the eukaryotic ribosomal protein eL32 family.

This is Large ribosomal subunit protein eL32 from Thermococcus sibiricus (strain DSM 12597 / MM 739).